The primary structure comprises 117 residues: Non-specific lipid-transfer protein B (117 aa).

A signal peptide spans Met-1–Ala-25. Cystine bridges form between Cys-29–Cys-76, Cys-39–Cys-53, Cys-54–Cys-99, and Cys-74–Cys-113.

It belongs to the plant LTP family.

Functionally, plant non-specific lipid-transfer proteins transfer phospholipids as well as galactolipids across membranes. May play a role in wax or cutin deposition in the cell walls of expanding epidermal cells and certain secretory tissues. This chain is Non-specific lipid-transfer protein B (WAX9B), found in Brassica oleracea var. italica (Broccoli).